The following is a 370-amino-acid chain: 3-dehydroquinate synthase (370 aa).

NAD(+)-binding positions include Gly108–Asp112, Thr132–Thr133, Lys145, and Lys154. 3 residues coordinate Zn(2+): Glu187, His249, and His267.

It belongs to the sugar phosphate cyclases superfamily. Dehydroquinate synthase family. Co(2+) serves as cofactor. The cofactor is Zn(2+). It depends on NAD(+) as a cofactor.

It is found in the cytoplasm. The enzyme catalyses 7-phospho-2-dehydro-3-deoxy-D-arabino-heptonate = 3-dehydroquinate + phosphate. The protein operates within metabolic intermediate biosynthesis; chorismate biosynthesis; chorismate from D-erythrose 4-phosphate and phosphoenolpyruvate: step 2/7. In terms of biological role, catalyzes the conversion of 3-deoxy-D-arabino-heptulosonate 7-phosphate (DAHP) to dehydroquinate (DHQ). In Cereibacter sphaeroides (strain ATCC 17029 / ATH 2.4.9) (Rhodobacter sphaeroides), this protein is 3-dehydroquinate synthase.